Consider the following 579-residue polypeptide: Nif-specific regulatory protein (579 aa).

The 148-residue stretch at 40–187 (DPVAEVPQIF…MVASLLEQAL (148 aa)) folds into the GAF domain. The 229-residue stretch at 226-454 (IVGSSPAIAE…LENCVNRAAA (229 aa)) folds into the Sigma-54 factor interaction domain. Residues 254-261 (GESGTGKE) and 317-326 (ADGGTLFLDE) contribute to the ATP site. The interval 464 to 536 (EELACRQGAC…PLRTKTAQLS (73 aa)) is inter-domain linker. A divalent metal cation-binding residues include C468 and C473. Residues 502-529 (RVSAPPPEPAPAPEPAPEAPPREEVPLR) form a disordered region. A run of 7 repeats spans residues 505–506 (AP), 507–508 (PP), 509–510 (EP), 511–512 (AP), 513–514 (AP), 515–516 (EP), and 517–518 (AP). Residues 505-518 (APPPEPAPAPEPAP) form a 7 X 2 AA tandem repeats of X-P region. Residues 505 to 520 (APPPEPAPAPEPAPEA) are compositionally biased toward pro residues. Positions 537–579 (REELLRALESAGWVQAKAARLLGMTPRQIAYALQKFEIELRKI) are C-terminal DNA-binding domain. The segment at residues 551-570 (QAKAARLLGMTPRQIAYALQ) is a DNA-binding region (H-T-H motif).

As to quaternary structure, interacts with sigma-54.

Required for activation of most nif operons, which are directly involved in nitrogen fixation. The protein is Nif-specific regulatory protein (nifA1) of Rhodobacter capsulatus (strain ATCC BAA-309 / NBRC 16581 / SB1003).